A 482-amino-acid chain; its full sequence is tRNA sulfurtransferase (482 aa).

The THUMP domain maps to 61–165; the sequence is DQILAILMQT…YDHLHQVLHR (105 aa). Residues 183–184, Lys265, Gly287, and Gln296 each bind ATP; that span reads LI. A disulfide bridge connects residues Cys344 and Cys456. The 79-residue stretch at 404 to 482 folds into the Rhodanese domain; the sequence is IGDGAIVLDI…GYGNIKVYRP (79 aa). Cys456 acts as the Cysteine persulfide intermediate in catalysis.

This sequence belongs to the ThiI family.

The protein localises to the cytoplasm. The enzyme catalyses [ThiI sulfur-carrier protein]-S-sulfanyl-L-cysteine + a uridine in tRNA + 2 reduced [2Fe-2S]-[ferredoxin] + ATP + H(+) = [ThiI sulfur-carrier protein]-L-cysteine + a 4-thiouridine in tRNA + 2 oxidized [2Fe-2S]-[ferredoxin] + AMP + diphosphate. The catalysed reaction is [ThiS sulfur-carrier protein]-C-terminal Gly-Gly-AMP + S-sulfanyl-L-cysteinyl-[cysteine desulfurase] + AH2 = [ThiS sulfur-carrier protein]-C-terminal-Gly-aminoethanethioate + L-cysteinyl-[cysteine desulfurase] + A + AMP + 2 H(+). It functions in the pathway cofactor biosynthesis; thiamine diphosphate biosynthesis. Its function is as follows. Catalyzes the ATP-dependent transfer of a sulfur to tRNA to produce 4-thiouridine in position 8 of tRNAs, which functions as a near-UV photosensor. Also catalyzes the transfer of sulfur to the sulfur carrier protein ThiS, forming ThiS-thiocarboxylate. This is a step in the synthesis of thiazole, in the thiamine biosynthesis pathway. The sulfur is donated as persulfide by IscS. The protein is tRNA sulfurtransferase of Photobacterium profundum (strain SS9).